We begin with the raw amino-acid sequence, 647 residues long: Putative lipase atg15 (647 aa).

Topologically, residues 1–18 are cytoplasmic; sequence MLPSGKRKADAFSCTSAA. A helical; Signal-anchor for type II membrane protein membrane pass occupies residues 19 to 39; sequence RVTAKLALSFLALSTTPLVNA. Residues 40-647 are Lumenal-facing; that stretch reads FSYEEPNAQI…EGGEGPVNDL (608 aa). 4 N-linked (GlcNAc...) asparagine glycosylation sites follow: N203, N225, N283, and N307. S323 (charge relay system) is an active-site residue. The N-linked (GlcNAc...) asparagine glycan is linked to N469. The interval 597-626 is disordered; sequence APALPSSVLTPSATATPPEGQPDDSGKRCR.

The protein belongs to the AB hydrolase superfamily. Lipase family. In terms of assembly, binds to both phosphatidylinositol (PI) and phosphatidylinositol 3,5-bisphosphate (PIP2).

The protein resides in the endosome. The protein localises to the multivesicular body membrane. It localises to the prevacuolar compartment membrane. It catalyses the reaction a triacylglycerol + H2O = a diacylglycerol + a fatty acid + H(+). In terms of biological role, lipase which is essential for lysis of subvacuolar cytoplasm to vacuole targeted bodies and intravacuolar autophagic bodies. Involved in the lysis of intravacuolar multivesicular body (MVB) vesicles. The intravacuolar membrane disintegration by atg15 is critical to life span extension. The sequence is that of Putative lipase atg15 (atg15) from Neurospora crassa (strain ATCC 24698 / 74-OR23-1A / CBS 708.71 / DSM 1257 / FGSC 987).